The primary structure comprises 130 residues: Glycine cleavage system H protein (130 aa).

Residues 22 to 103 (KAYIGISDCA…PYGSWIAAIE (82 aa)) enclose the Lipoyl-binding domain. At Lys63 the chain carries N6-lipoyllysine.

This sequence belongs to the GcvH family. In terms of assembly, the glycine cleavage system is composed of four proteins: P, T, L and H. Requires (R)-lipoate as cofactor.

Functionally, the glycine cleavage system catalyzes the degradation of glycine. The H protein shuttles the methylamine group of glycine from the P protein to the T protein. This Clostridium botulinum (strain Okra / Type B1) protein is Glycine cleavage system H protein.